Reading from the N-terminus, the 263-residue chain is MRLIIEPDYDKLSKWAADYVIERIHKAAPTAEKPFVLGLPTGSSPIGMYRELVKACKEGCISFRHVITFNMDEYVGLAIEHPESYHSFMHRHLFDHIDILPQNIHILNGNAPDLTAECDAYERAIEAAGGIDLFIGGIGPDGHIAFNEPGSSLTSRTRIKTLTTDTVLANSRFFDNDTNQVPKRALTVGVGTIMDAREVMILVNGHTKARALREAVEGAVSQMWTITALQLHRQSIIVCDEAACVELKVGTYNYFKDIERNNL.

The active-site Proton acceptor; for enolization step is aspartate 72. Aspartate 141 serves as the catalytic For ring-opening step. Histidine 143 serves as the catalytic Proton acceptor; for ring-opening step. Glutamate 148 serves as the catalytic For ring-opening step.

Belongs to the glucosamine/galactosamine-6-phosphate isomerase family. NagB subfamily.

It carries out the reaction alpha-D-glucosamine 6-phosphate + H2O = beta-D-fructose 6-phosphate + NH4(+). The protein operates within amino-sugar metabolism; N-acetylneuraminate degradation; D-fructose 6-phosphate from N-acetylneuraminate: step 5/5. Allosterically activated by N-acetylglucosamine 6-phosphate (GlcNAc6P). Its function is as follows. Catalyzes the reversible isomerization-deamination of glucosamine 6-phosphate (GlcN6P) to form fructose 6-phosphate (Fru6P) and ammonium ion. This Porphyromonas gingivalis (strain ATCC BAA-308 / W83) protein is Glucosamine-6-phosphate deaminase.